The primary structure comprises 205 residues: Probable GTP-binding protein EngB (205 aa).

The EngB-type G domain maps to 22-198 (HLPEYAFIGR…LSYIDEVNQD (177 aa)). Residues 30 to 37 (GRSNVGKS), 57 to 61 (GKTQL), 75 to 78 (DLPG), 142 to 145 (TKAD), and 177 to 179 (TSA) contribute to the GTP site. S37 and T59 together coordinate Mg(2+).

This sequence belongs to the TRAFAC class TrmE-Era-EngA-EngB-Septin-like GTPase superfamily. EngB GTPase family. The cofactor is Mg(2+).

Necessary for normal cell division and for the maintenance of normal septation. In Flavobacterium psychrophilum (strain ATCC 49511 / DSM 21280 / CIP 103535 / JIP02/86), this protein is Probable GTP-binding protein EngB.